Here is a 651-residue protein sequence, read N- to C-terminus: Acetyl-coenzyme A synthetase (651 aa).

CoA-binding positions include Arg-189–Lys-192, Thr-311, and Asn-335. ATP-binding positions include Gly-387–Pro-389, Asp-411–Thr-416, Asp-500, and Arg-515. Ser-523 provides a ligand contact to CoA. Arg-526 contributes to the ATP binding site. Mg(2+) is bound by residues Val-537, His-539, and Val-542. Arg-584 is a binding site for CoA. Lys-609 is subject to N6-acetyllysine.

The protein belongs to the ATP-dependent AMP-binding enzyme family. It depends on Mg(2+) as a cofactor. In terms of processing, acetylated. Deacetylation by the SIR2-homolog deacetylase activates the enzyme.

It catalyses the reaction acetate + ATP + CoA = acetyl-CoA + AMP + diphosphate. In terms of biological role, catalyzes the conversion of acetate into acetyl-CoA (AcCoA), an essential intermediate at the junction of anabolic and catabolic pathways. AcsA undergoes a two-step reaction. In the first half reaction, AcsA combines acetate with ATP to form acetyl-adenylate (AcAMP) intermediate. In the second half reaction, it can then transfer the acetyl group from AcAMP to the sulfhydryl group of CoA, forming the product AcCoA. In Rhizobium etli (strain ATCC 51251 / DSM 11541 / JCM 21823 / NBRC 15573 / CFN 42), this protein is Acetyl-coenzyme A synthetase.